The following is a 314-amino-acid chain: Ribonucleoside-diphosphate reductase small subunit (314 aa).

Asp-73, Glu-103, and His-106 together coordinate Fe cation. Residue Tyr-110 is part of the active site. Residues 160 to 180 form a helical membrane-spanning segment; sequence VLMILIEGIFFSSSFAAIAYL. Positions 166, 200, and 203 each coordinate Fe cation.

This sequence belongs to the ribonucleoside diphosphate reductase small chain family. Heterotetramer composed of a homodimer of the large subunit (R1) and a homodimer of the small subunit (R2). Larger multisubunit protein complex are also active, composed of (R1)n(R2)n. The cofactor is Fe cation.

It localises to the host membrane. It carries out the reaction a 2'-deoxyribonucleoside 5'-diphosphate + [thioredoxin]-disulfide + H2O = a ribonucleoside 5'-diphosphate + [thioredoxin]-dithiol. Ribonucleoside-diphosphate reductase holoenzyme provides the precursors necessary for viral DNA synthesis. Allows virus growth in non-dividing cells, as well as reactivation from latency in infected hosts. Catalyzes the biosynthesis of deoxyribonucleotides from the corresponding ribonucleotides. In Bovine herpesvirus 1.1 (strain Cooper) (BoHV-1), this protein is Ribonucleoside-diphosphate reductase small subunit.